The primary structure comprises 350 residues: MLDIDGSWGEGGGQILRTTLSLSAITGQPIRLYQIRAGRQKPGLSAQHLTCVRAAATICNAEVRGDKLRSTLLEFIPTRPPQAGHYTFDVMDAQEGGSAGAVTLILQTILLPLAIASEESTVILKGGTHVAWSPPISYIEQVYLPLLSKLGLQTELHLQAWGWYPQGGGEVHLHIKGNCQLQGVELLERGALKQVKGLAVVTELPSHIPQRMAMRCEKLLQQAHVKGYVQPLRAKGVAPGAGVFLTSEYEHICAGFAALGRRGLPAESVAQNAVEQLLSFHQQDAPVEEFLGDQLLLPMILAQSPSQYRVAHISEHLKTNVQTISQFGLAQIDLNLEDRLVFVKPGHNLT.

ATP-binding positions include glutamine 107 and 290–294 (FLGDQ). The Tele-AMP-histidine intermediate role is filled by histidine 316.

This sequence belongs to the RNA 3'-terminal cyclase family. Type 1 subfamily.

The protein resides in the cytoplasm. It carries out the reaction a 3'-end 3'-phospho-ribonucleotide-RNA + ATP = a 3'-end 2',3'-cyclophospho-ribonucleotide-RNA + AMP + diphosphate. Functionally, catalyzes the conversion of 3'-phosphate to a 2',3'-cyclic phosphodiester at the end of RNA. The mechanism of action of the enzyme occurs in 3 steps: (A) adenylation of the enzyme by ATP; (B) transfer of adenylate to an RNA-N3'P to produce RNA-N3'PP5'A; (C) and attack of the adjacent 2'-hydroxyl on the 3'-phosphorus in the diester linkage to produce the cyclic end product. The biological role of this enzyme is unknown but it is likely to function in some aspects of cellular RNA processing. The polypeptide is RNA 3'-terminal phosphate cyclase (Gloeothece citriformis (strain PCC 7424) (Cyanothece sp. (strain PCC 7424))).